Reading from the N-terminus, the 484-residue chain is Glutamyl-tRNA(Gln) amidotransferase subunit A (484 aa).

Active-site charge relay system residues include Lys76 and Ser151. The active-site Acyl-ester intermediate is the Ser175.

This sequence belongs to the amidase family. GatA subfamily. In terms of assembly, heterotrimer of A, B and C subunits.

It carries out the reaction L-glutamyl-tRNA(Gln) + L-glutamine + ATP + H2O = L-glutaminyl-tRNA(Gln) + L-glutamate + ADP + phosphate + H(+). Allows the formation of correctly charged Gln-tRNA(Gln) through the transamidation of misacylated Glu-tRNA(Gln) in organisms which lack glutaminyl-tRNA synthetase. The reaction takes place in the presence of glutamine and ATP through an activated gamma-phospho-Glu-tRNA(Gln). The polypeptide is Glutamyl-tRNA(Gln) amidotransferase subunit A (Saccharophagus degradans (strain 2-40 / ATCC 43961 / DSM 17024)).